Here is a 193-residue protein sequence, read N- to C-terminus: uncharacterized protein (193 aa).

A disordered region spans residues 158 to 193 (YNPIYDDHNPLPPEKKKSILSRTRSTKLSSGEITPV). The span at 162–174 (YDDHNPLPPEKKK) shows a compositional bias: basic and acidic residues. Positions 177–193 (LSRTRSTKLSSGEITPV) are enriched in polar residues.

This is an uncharacterized protein from Micromonas pusilla (Picoplanktonic green alga).